The primary structure comprises 380 residues: Putative glutamate--cysteine ligase 2-1 (380 aa).

The protein belongs to the glutamate--cysteine ligase type 2 family. YbdK subfamily.

It catalyses the reaction L-cysteine + L-glutamate + ATP = gamma-L-glutamyl-L-cysteine + ADP + phosphate + H(+). ATP-dependent carboxylate-amine ligase which exhibits weak glutamate--cysteine ligase activity. In Mycolicibacterium vanbaalenii (strain DSM 7251 / JCM 13017 / BCRC 16820 / KCTC 9966 / NRRL B-24157 / PYR-1) (Mycobacterium vanbaalenii), this protein is Putative glutamate--cysteine ligase 2-1.